The chain runs to 142 residues: Hemoglobin subunit alpha (142 aa).

Position 1 is an N-acetylserine (serine 1). The region spanning 1–142 (SLSDKDKAAV…LSLALAEKYR (142 aa)) is the Globin domain. Residues histidine 59 and histidine 88 each contribute to the heme b site.

The protein belongs to the globin family. As to quaternary structure, heterotetramer of two alpha chains and two beta chains. Red blood cells.

In terms of biological role, involved in oxygen transport from gills to the various peripheral tissues. This is Hemoglobin subunit alpha from Lycodes reticulatus (Arctic eelpout).